The sequence spans 390 residues: Bibenzyl synthase (390 aa).

C164 is a catalytic residue.

Belongs to the thiolase-like superfamily. Chalcone/stilbene synthases family.

The catalysed reaction is 3-(3-hydroxyphenyl)-propanoyl-CoA + 3 malonyl-CoA + 3 H(+) = 3,3',5-trihydroxybibenzyl + 4 CO2 + 4 CoA. In Phalaenopsis sp. (Moth orchid), this protein is Bibenzyl synthase (BIBSY212).